The following is a 508-amino-acid chain: Small ribosomal subunit protein mS47 (508 aa).

It belongs to the enoyl-CoA hydratase/isomerase family. Mitochondrion-specific ribosomal protein mS47 subfamily. Component of the mitochondrial small ribosomal subunit (mt-SSU). Mature N.crassa 74S mitochondrial ribosomes consist of a small (37S) and a large (54S) subunit. The 37S small subunit contains a 16S ribosomal RNA (16S mt-rRNA) and 32 different proteins. The 54S large subunit contains a 23S rRNA (23S mt-rRNA) and 42 different proteins. mS47 forms a protuberance of the N.crassa mitoribosome and retains a solvent-exposed cavity liekly capable of accommodating a substrate, in accordance with it being an active enzyme as well as an integral constituent of the mitoribosome.

Its subcellular location is the mitochondrion. It catalyses the reaction 3-hydroxy-2-methylpropanoyl-CoA + H2O = 3-hydroxy-2-methylpropanoate + CoA + H(+). Functionally, component of the mitochondrial ribosome (mitoribosome), a dedicated translation machinery responsible for the synthesis of mitochondrial genome-encoded proteins, including at least some of the essential transmembrane subunits of the mitochondrial respiratory chain. The mitoribosomes are attached to the mitochondrial inner membrane and translation products are cotranslationally integrated into the membrane. mS47 has enzymatic activity in vitro, and is able to catalyze the specific hydrolysis of 3-hydroxyisobutyryl-CoA (HIBYL-CoA). However, because the turnover rate of mS47 is only a fraction of that of the homologous mammalian enzyme, the physiological function of this activity remains unclear. This is Small ribosomal subunit protein mS47 (ehd3) from Neurospora crassa (strain ATCC 24698 / 74-OR23-1A / CBS 708.71 / DSM 1257 / FGSC 987).